Consider the following 157-residue polypeptide: MLVTTSRKPSAKSRTLCKLLSRFTASRCISRGKMGMQELLDFTEGNTFIVVGEYHGNPGELSFHDNEGKLLFSIRFSDRYSEEIDSYWFPDVLPVLTGEGEIAEALESFFHFERVESDRVVQLPQNSLVMAIGDKEIDFMGSGKSLFKFNIKGFKKY.

The Brix domain maps to 1–157 (MLVTTSRKPS…KFNIKGFKKY (157 aa)).

In terms of biological role, probably involved in the biogenesis of the ribosome. The sequence is that of Probable Brix domain-containing ribosomal biogenesis protein from Methanosarcina mazei (strain ATCC BAA-159 / DSM 3647 / Goe1 / Go1 / JCM 11833 / OCM 88) (Methanosarcina frisia).